We begin with the raw amino-acid sequence, 241 residues long: MTFSRPSGRTADQLRPVRIERAFTRHAEGSVLVSFGDTHVLCTASVENRVPNFLRGKGEGWVTAEYGMLPRSTHTRSDREAARGKQGGRTLEIQRLIGRALRACVDRNALGERTITLDCDVLQADGGTRTAAITGAYVALADAVNLLLKRGEIKKHPLIGAVAAVSVGIYRGEPVLDLDYPEDSDCDTDMNVVMNDGGGFIELQGTAEGHAFRRDELNALLALAEKGMGDLFALQRAALAG.

Residues R89 and 127 to 129 (GTR) each bind phosphate.

Belongs to the RNase PH family. As to quaternary structure, homohexameric ring arranged as a trimer of dimers.

It catalyses the reaction tRNA(n+1) + phosphate = tRNA(n) + a ribonucleoside 5'-diphosphate. Phosphorolytic 3'-5' exoribonuclease that plays an important role in tRNA 3'-end maturation. Removes nucleotide residues following the 3'-CCA terminus of tRNAs; can also add nucleotides to the ends of RNA molecules by using nucleoside diphosphates as substrates, but this may not be physiologically important. Probably plays a role in initiation of 16S rRNA degradation (leading to ribosome degradation) during starvation. This is Ribonuclease PH from Xanthomonas oryzae pv. oryzae (strain MAFF 311018).